Consider the following 207-residue polypeptide: Cytochrome bo(3) ubiquinol oxidase subunit 3 (207 aa).

The Cytoplasmic portion of the chain corresponds to 1-26 (MSSQVMHGAAHGHDHGHDDHHHDSGQ). Residues 27–47 (MTVLGFWLYLMTDCILFASLF) form a helical membrane-spanning segment. Topologically, residues 48–70 (ATYAVLSGSFAGGPSGHDIFQLD) are periplasmic. A helical transmembrane segment spans residues 71-91 (FVAVETLFLLLSSITFGFAML). Residues 92–99 (KMFDGKKA) are Cytoplasmic-facing. The chain crosses the membrane as a helical span at residues 100–120 (GVLGWLAVTFLFGAGFIAMEI). The Periplasmic portion of the chain corresponds to 121–141 (YEFHHLIAEGFGPQRSGFLSG). A helical transmembrane segment spans residues 142 to 162 (FFALVGTHGLHVTAGLIWMAI). At 163–185 (MMYQINKHGITPTAKTRMSCLSL) the chain is on the cytoplasmic side. Residues 186–206 (FWHFLDVVWICVFTVVYLLGV) traverse the membrane as a helical segment. Position 207 (leucine 207) is a topological domain, periplasmic.

It belongs to the cytochrome c oxidase subunit 3 family. In terms of assembly, heterooctamer of two A chains, two B chains, two C chains and two D chains.

The protein resides in the cell inner membrane. Its function is as follows. Cytochrome bo(3) ubiquinol terminal oxidase is the component of the aerobic respiratory chain of E.coli that predominates when cells are grown at high aeration. Has proton pump activity across the membrane in addition to electron transfer, pumping 2 protons/electron. This Pseudomonas putida (Arthrobacter siderocapsulatus) protein is Cytochrome bo(3) ubiquinol oxidase subunit 3 (cyoC).